A 125-amino-acid chain; its full sequence is Large ribosomal subunit protein bL12 (125 aa).

It belongs to the bacterial ribosomal protein bL12 family. Homodimer. Part of the ribosomal stalk of the 50S ribosomal subunit. Forms a multimeric L10(L12)X complex, where L10 forms an elongated spine to which 2 to 4 L12 dimers bind in a sequential fashion. Binds GTP-bound translation factors.

In terms of biological role, forms part of the ribosomal stalk which helps the ribosome interact with GTP-bound translation factors. Is thus essential for accurate translation. This chain is Large ribosomal subunit protein bL12, found in Alkalilimnicola ehrlichii (strain ATCC BAA-1101 / DSM 17681 / MLHE-1).